Reading from the N-terminus, the 241-residue chain is tRNA pseudouridine synthase A (241 aa).

Asp-51 acts as the Nucleophile in catalysis. Tyr-110 serves as a coordination point for substrate.

This sequence belongs to the tRNA pseudouridine synthase TruA family. In terms of assembly, homodimer.

It carries out the reaction uridine(38/39/40) in tRNA = pseudouridine(38/39/40) in tRNA. Formation of pseudouridine at positions 38, 39 and 40 in the anticodon stem and loop of transfer RNAs. The sequence is that of tRNA pseudouridine synthase A from Campylobacter jejuni subsp. jejuni serotype O:2 (strain ATCC 700819 / NCTC 11168).